Here is a 239-residue protein sequence, read N- to C-terminus: tRNA (guanine-N(1)-)-methyltransferase (239 aa).

S-adenosyl-L-methionine is bound by residues glycine 108 and 127 to 132; that span reads LGDFVL.

It belongs to the RNA methyltransferase TrmD family. In terms of assembly, homodimer.

The protein resides in the cytoplasm. It carries out the reaction guanosine(37) in tRNA + S-adenosyl-L-methionine = N(1)-methylguanosine(37) in tRNA + S-adenosyl-L-homocysteine + H(+). Its function is as follows. Specifically methylates guanosine-37 in various tRNAs. This chain is tRNA (guanine-N(1)-)-methyltransferase, found in Streptococcus pyogenes serotype M6 (strain ATCC BAA-946 / MGAS10394).